The following is a 434-amino-acid chain: Methylenetetrahydrofolate--tRNA-(uracil-5-)-methyltransferase TrmFO (434 aa).

10–15 is a binding site for FAD; that stretch reads GAGLAG.

This sequence belongs to the MnmG family. TrmFO subfamily. FAD is required as a cofactor.

The protein resides in the cytoplasm. The enzyme catalyses uridine(54) in tRNA + (6R)-5,10-methylene-5,6,7,8-tetrahydrofolate + NADH + H(+) = 5-methyluridine(54) in tRNA + (6S)-5,6,7,8-tetrahydrofolate + NAD(+). It carries out the reaction uridine(54) in tRNA + (6R)-5,10-methylene-5,6,7,8-tetrahydrofolate + NADPH + H(+) = 5-methyluridine(54) in tRNA + (6S)-5,6,7,8-tetrahydrofolate + NADP(+). Catalyzes the folate-dependent formation of 5-methyl-uridine at position 54 (M-5-U54) in all tRNAs. This chain is Methylenetetrahydrofolate--tRNA-(uracil-5-)-methyltransferase TrmFO, found in Bacillus cereus (strain Q1).